The primary structure comprises 357 residues: Fructose-1,6-bisphosphatase class 1 2 (357 aa).

Residues E90, D112, L114, and D115 each coordinate Mg(2+). Residues 115 to 118 (DGSS) and N206 each bind substrate. Mg(2+) is bound at residue E278.

It belongs to the FBPase class 1 family. In terms of assembly, homotetramer. It depends on Mg(2+) as a cofactor.

The protein localises to the cytoplasm. The catalysed reaction is beta-D-fructose 1,6-bisphosphate + H2O = beta-D-fructose 6-phosphate + phosphate. Its pathway is carbohydrate biosynthesis; gluconeogenesis. The protein is Fructose-1,6-bisphosphatase class 1 2 of Dechloromonas aromatica (strain RCB).